We begin with the raw amino-acid sequence, 634 residues long: Growth hormone receptor (634 aa).

Residues 1–18 form the signal peptide; the sequence is MDLWQLLLTLAVAGSSDA. Topologically, residues 19–260 are extracellular; that stretch reads FSGSEATPAF…NPSACEEDFQ (242 aa). An N-linked (GlcNAc...) asparagine glycan is attached at N46. C56 and C66 are oxidised to a cystine. N73 is a glycosylation site (N-linked (GlcNAc...) asparagine). C97 and C108 are disulfide-bonded. A glycan (N-linked (GlcNAc...) asparagine) is linked at N111. A disulfide bond links C122 and C136. A Fibronectin type-III domain is found at 147-250; it reads PPVGLNWTLL…EVLLITFPQM (104 aa). Residues N152, N157, and N196 are each glycosylated (N-linked (GlcNAc...) asparagine). The WSXWS motif motif lies at 236-240; that stretch reads YGKFS. Residues 261–284 traverse the membrane as a helical segment; that stretch reads FPWFLIIMFGILGLAVTLFLLIFS. The Cytoplasmic segment spans residues 285–634; the sequence is KQQRIKMLIL…STDQLNKIMP (350 aa). The segment at 290–375 is required for JAK2 binding; sequence KMLILPPVPV…HEKSLNIFGA (86 aa). A Box 1 motif motif is present at residues 293-301; the sequence is ILPPVPVPK. Residues 336-345 carry the UbE motif motif; sequence DSWVEFIELD. Position 337 is a phosphoserine (S337). Phosphotyrosine is present on residues Y483 and Y591.

Belongs to the type I cytokine receptor family. Type 1 subfamily. On growth hormone (GH) binding, forms homodimers and binds JAK2 via a box 1-containing domain. Post-translationally, the soluble form (GHBP) is produced by phorbol ester-promoted proteolytic cleavage at the cell surface (shedding) by ADAM17/TACE. Shedding is inhibited by growth hormone (GH) binding to the receptor probably due to a conformational change in GHR rendering the receptor inaccessible to ADAM17. In terms of processing, on GH binding, phosphorylated on tyrosine residues in the cytoplasmic domain by JAK2. Ubiquitinated by the ECS(SOCS2) complex following ligand-binding and phosphorylation by JAK2, leading to its degradation by the proteasome. Regulation by the ECS(SOCS2) complex acts as a negative feedback loop of growth hormone receptor signaling. Ubiquitination is not sufficient for GHR internalization.

Its subcellular location is the cell membrane. It localises to the secreted. In terms of biological role, receptor for pituitary gland growth hormone (GH1) involved in regulating postnatal body growth. On ligand binding, couples to the JAK2/STAT5 pathway. Functionally, the soluble form (GHBP) acts as a reservoir of growth hormone in plasma and may be a modulator/inhibitor of GH signaling. The chain is Growth hormone receptor (GHR) from Bos indicus (Zebu).